Reading from the N-terminus, the 790-residue chain is Alpha,alpha-trehalose-phosphate synthase [UDP-forming] B (790 aa).

The protein in the N-terminal section; belongs to the glycosyltransferase 20 family. It in the C-terminal section; belongs to the trehalose phosphatase family.

The catalysed reaction is D-glucose 6-phosphate + UDP-alpha-D-glucose = alpha,alpha-trehalose 6-phosphate + UDP + H(+). Synthesizes trehalose 6-phosphate, the precursor for the production of trehalose, the main carbohydrate storage reserve of the dormant spore. Trehalose accumulates in both prestalk and prespore cells and then is rapidly metabolized during terminal differentiation of stalk cells, while being stored in spores, where it serves as the principal energy and carbon source for germination. This is Alpha,alpha-trehalose-phosphate synthase [UDP-forming] B (tpsB) from Dictyostelium discoideum (Social amoeba).